The primary structure comprises 164 residues: FMN reductase (NADH) RutF (164 aa).

The protein belongs to the non-flavoprotein flavin reductase family. RutF subfamily.

It carries out the reaction FMNH2 + NAD(+) = FMN + NADH + 2 H(+). In terms of biological role, catalyzes the reduction of FMN to FMNH2 which is used to reduce pyrimidine by RutA via the Rut pathway. The polypeptide is FMN reductase (NADH) RutF (Klebsiella pneumoniae (strain 342)).